A 926-amino-acid polypeptide reads, in one-letter code: Protein O-mannosyl-transferase Tmtc3 (926 aa).

The disordered stretch occupies residues 1 to 26 (MSTNPNPGIHQYAPSTLPREREREGA). The Cytoplasmic portion of the chain corresponds to 1–36 (MSTNPNPGIHQYAPSTLPREREREGATNSPQRNLLE). Residues 37-57 (FLCICVACIVCYYNSTQCGLV) traverse the membrane as a helical segment. Residues 58–114 (FDDISAIRDNKDLRPHTPLINVFLNDFWGTPMRKEQSHKSYRPLTVLTFRFNYLLHA) are Extracellular-facing. Residues 115–135 (LEPFGYHLVNLLLHLSVCLLW) form a helical membrane-spanning segment. Residues 136 to 169 (RRVCRLLLRQCAASGSNAISAPSSSSVSQLNTCA) are Cytoplasmic-facing. A helical transmembrane segment spans residues 170–190 (FVASLLFAVHPVHTEAVTGVV). Over 191-192 (GR) the chain is Extracellular. Residues 193–213 (AELLSSICFLAAFLSYAKSVG) form a helical membrane-spanning segment. Residues 214-222 (DSGCPRRTN) lie on the Cytoplasmic side of the membrane. The next 2 membrane-spanning stretches (helical) occupy residues 223–239 (WLTL…ASML) and 240–259 (CKEQ…LFVV). At 260–303 (HQLRPLHLCHFVLRLFDERTEQQSPKLANPSGIRRWSSSTLWKR) the chain is on the cytoplasmic side. Residues 304-324 (LSFLVGITLTLLVGRVYVMGS) traverse the membrane as a helical segment. Topologically, residues 325 to 345 (QLPIFTRFDNPASAADTPERQ) are extracellular. A helical membrane pass occupies residues 346–366 (LTYGYLIYLNCWLLLCPSLLC). At 367 to 384 (CDWTMGTVPLLQGFTDSR) the chain is on the cytoplasmic side. Residues 385–405 (NITTLLTFLALGAMVAKTCFT) form a helical membrane-spanning segment. The Extracellular segment spans residues 406–419 (RNLALSRTLIMCLG). A helical membrane pass occupies residues 420–440 (WMVLPFLPASNLFFPVGFVVA). At 441 to 442 (ER) the chain is on the cytoplasmic side. A helical membrane pass occupies residues 443–463 (ILYMPSMGYCLLVAYGFEQLQ). Topologically, residues 464 to 926 (RRGSLSWQRF…RPTHKSRKRS (463 aa)) are extracellular. 9 TPR repeats span residues 514-547 (AKLY…QTDD), 548-581 (IGAH…FPQA), 596-630 (LNVF…RSDY), 631-664 (VQAY…DNEN), 665-698 (ADIY…YPEH), 736-769 (EKVY…KADF), 770-803 (RSAL…HPSH), 805-838 (KGLI…DPHN), and 839-872 (TQGL…APAE). 2 N-linked (GlcNAc...) asparagine glycosylation sites follow: Asn609 and Asn645.

It belongs to the TMTC family.

Its subcellular location is the membrane. It is found in the endoplasmic reticulum. It carries out the reaction a di-trans,poly-cis-dolichyl beta-D-mannosyl phosphate + L-seryl-[protein] = 3-O-(alpha-D-mannosyl)-L-seryl-[protein] + a di-trans,poly-cis-dolichyl phosphate + H(+). It catalyses the reaction a di-trans,poly-cis-dolichyl beta-D-mannosyl phosphate + L-threonyl-[protein] = 3-O-(alpha-D-mannosyl)-L-threonyl-[protein] + a di-trans,poly-cis-dolichyl phosphate + H(+). It participates in protein modification; protein glycosylation. Transfers mannosyl residues to the hydroxyl group of serine or threonine residues. The sequence is that of Protein O-mannosyl-transferase Tmtc3 from Drosophila melanogaster (Fruit fly).